Reading from the N-terminus, the 393-residue chain is MVKQVDFAEVKLSEKFLGAGSGGAVRKATFQNQEIAVKIFDFLEETIKKNAEREITHLSEIDHENVIRVIGRASNGKKDYLLMEYLEEGSLHNYLYGDDKWEYTVEQAVRWALQCAKALAYLHSLDRPIVHRDIKPQNMLLYNQHEDLKICDFGLATDMSNNKTDMQGTLRYMAPEAIKHLKYTAKCDVYSFGIMLWELMTRQLPYSHLENPNSQYAIMKAISSGEKLPMEAVRSDCPEGIKQLMECCMDINPEKRPSMKEIEKFLGEQYESGTDEDFIKPLDEDTVAVVTYHVDSSGSRIMRVDFWRHQLPSIRMTFPIVKREAERLGKTVVREMAKAAADGDREVRRAEKDTERETSRAAHNGERETRRAGQDVGRETVRAVKKIGKKLRF.

One can recognise a Protein kinase domain in the interval 11 to 266; it reads KLSEKFLGAG…PSMKEIEKFL (256 aa). Residues 17 to 25 and lysine 38 each bind ATP; that span reads LGAGSGGAV. The Proton acceptor role is filled by aspartate 133. The tract at residues 339-379 is disordered; the sequence is AAADGDREVRRAEKDTERETSRAAHNGERETRRAGQDVGRE.

This sequence belongs to the protein kinase superfamily. STE Ser/Thr protein kinase family. MAP kinase kinase kinase subfamily. Mg(2+) is required as a cofactor.

The catalysed reaction is L-seryl-[protein] + ATP = O-phospho-L-seryl-[protein] + ADP + H(+). The enzyme catalyses L-threonyl-[protein] + ATP = O-phospho-L-threonyl-[protein] + ADP + H(+). This Drosophila melanogaster (Fruit fly) protein is Putative mitogen-activated protein kinase kinase kinase 7-like (Takl1).